A 353-amino-acid chain; its full sequence is Fe(3+) ions import ATP-binding protein FbpC (353 aa).

The region spanning 9 to 239 (VVFENVRKTF…PASSFIADFM (231 aa)) is the ABC transporter domain. 41–48 (GPSGCGKT) is an ATP binding site.

It belongs to the ABC transporter superfamily. Fe(3+) ion importer (TC 3.A.1.10) family. The complex is composed of two ATP-binding proteins (FbpC), two transmembrane proteins (FbpB) and a solute-binding protein (FbpA).

It is found in the cell inner membrane. The catalysed reaction is Fe(3+)(out) + ATP + H2O = Fe(3+)(in) + ADP + phosphate + H(+). Part of the ABC transporter complex FbpABC involved in Fe(3+) ions import. Responsible for energy coupling to the transport system. In Agrobacterium fabrum (strain C58 / ATCC 33970) (Agrobacterium tumefaciens (strain C58)), this protein is Fe(3+) ions import ATP-binding protein FbpC.